We begin with the raw amino-acid sequence, 353 residues long: Serine proteinase inhibitor 1 (353 aa).

This sequence belongs to the serpin family. Poxviruses subfamily.

The protein localises to the host cytoplasm. Plays a role in mediating viral host range. May act to inhibit a caspase independent form of apoptosis to allow efficient virus replication in infected cells. This is Serine proteinase inhibitor 1 (OPG208) from Vaccinia virus (strain Copenhagen) (VACV).